Consider the following 123-residue polypeptide: MPTINQLIRIGRESKKDKSTAPALKCCPQKRGVCTRVYTTTPKKPNSALRKVARVRLTNGIEVTSYIPGVGHNLQEHSVVLIRGGRVKDLPGVRYHIVRGTLDSVGVKDRKKSRSKYGAKRPK.

Residue aspartate 89 is modified to 3-methylthioaspartic acid. Residues 104–123 form a disordered region; it reads SVGVKDRKKSRSKYGAKRPK. The segment covering 109 to 123 has biased composition (basic residues); sequence DRKKSRSKYGAKRPK.

This sequence belongs to the universal ribosomal protein uS12 family. Part of the 30S ribosomal subunit. Contacts proteins S8 and S17. May interact with IF1 in the 30S initiation complex.

In terms of biological role, with S4 and S5 plays an important role in translational accuracy. Interacts with and stabilizes bases of the 16S rRNA that are involved in tRNA selection in the A site and with the mRNA backbone. Located at the interface of the 30S and 50S subunits, it traverses the body of the 30S subunit contacting proteins on the other side and probably holding the rRNA structure together. The combined cluster of proteins S8, S12 and S17 appears to hold together the shoulder and platform of the 30S subunit. This is Small ribosomal subunit protein uS12 from Geotalea daltonii (strain DSM 22248 / JCM 15807 / FRC-32) (Geobacter daltonii).